The sequence spans 542 residues: CTP synthase (542 aa).

An amidoligase domain region spans residues 1 to 269 (MQTKYIFITG…DALICELLHL (269 aa)). Residue Ser-14 participates in CTP binding. Ser-14 serves as a coordination point for UTP. ATP is bound by residues 15–20 (SLGKGL) and Asp-72. 2 residues coordinate Mg(2+): Asp-72 and Glu-143. CTP contacts are provided by residues 150–152 (DIE), 189–194 (KTKPSQ), and Lys-225. Residues 189–194 (KTKPSQ) and Lys-225 contribute to the UTP site. An ATP-binding site is contributed by 241–243 (KDV). One can recognise a Glutamine amidotransferase type-1 domain in the interval 301 to 538 (YVQHQDAYKS…IQAMIIYHKS (238 aa)). Residue Gly-358 participates in L-glutamine binding. Cys-385 serves as the catalytic Nucleophile; for glutamine hydrolysis. L-glutamine contacts are provided by residues 386-389 (LGMQ), Glu-409, and Arg-466. Catalysis depends on residues His-511 and Glu-513.

It belongs to the CTP synthase family. Homotetramer.

It carries out the reaction UTP + L-glutamine + ATP + H2O = CTP + L-glutamate + ADP + phosphate + 2 H(+). The catalysed reaction is L-glutamine + H2O = L-glutamate + NH4(+). The enzyme catalyses UTP + NH4(+) + ATP = CTP + ADP + phosphate + 2 H(+). It participates in pyrimidine metabolism; CTP biosynthesis via de novo pathway; CTP from UDP: step 2/2. With respect to regulation, allosterically activated by GTP, when glutamine is the substrate; GTP has no effect on the reaction when ammonia is the substrate. The allosteric effector GTP functions by stabilizing the protein conformation that binds the tetrahedral intermediate(s) formed during glutamine hydrolysis. Inhibited by the product CTP, via allosteric rather than competitive inhibition. Catalyzes the ATP-dependent amination of UTP to CTP with either L-glutamine or ammonia as the source of nitrogen. Regulates intracellular CTP levels through interactions with the four ribonucleotide triphosphates. The chain is CTP synthase from Protochlamydia amoebophila (strain UWE25).